The primary structure comprises 360 residues: MSKQILILPGDGIGPEIMAEAVKVLELANDKFQLGFSLAHDVIGGAAIDKHGVPLADETLERARKADAVLLGAVGGPKWDKIERDIRPERGLLKIRSQLGLFANLRPAILYPQLADASSLKPEIVSGLDILIVRELTGGIYFGAPRGQRELEGGERQAYDTLPYSESEVRRIARVGFDMARVRGKKLCSVDKANVLASSQLWREVVEDVAKDYPDVELSHMYVDNAAMQLVRAPKQFDVMVTDNMFGDILSDEASMLTGSIGMLPSASLDADNKGMYEPCHGSAPDIAGLGIANPLATILSVSMMLRYSFNQSAAAEAIEKAVSLVLDQGLRTGDIFSEGCRKVGTQEMGDAVVAALRNL.

76–89 is an NAD(+) binding site; the sequence is GPKWDKIERDIRPE. Positions 96, 106, 134, and 224 each coordinate substrate. 3 residues coordinate Mg(2+): D224, D248, and D252. 282 to 294 is a binding site for NAD(+); the sequence is GSAPDIAGLGIAN.

It belongs to the isocitrate and isopropylmalate dehydrogenases family. LeuB type 1 subfamily. As to quaternary structure, homodimer. Mg(2+) serves as cofactor. The cofactor is Mn(2+).

It localises to the cytoplasm. It carries out the reaction (2R,3S)-3-isopropylmalate + NAD(+) = 4-methyl-2-oxopentanoate + CO2 + NADH. Its pathway is amino-acid biosynthesis; L-leucine biosynthesis; L-leucine from 3-methyl-2-oxobutanoate: step 3/4. Catalyzes the oxidation of 3-carboxy-2-hydroxy-4-methylpentanoate (3-isopropylmalate) to 3-carboxy-4-methyl-2-oxopentanoate. The product decarboxylates to 4-methyl-2 oxopentanoate. This is 3-isopropylmalate dehydrogenase from Pseudomonas putida (strain ATCC 47054 / DSM 6125 / CFBP 8728 / NCIMB 11950 / KT2440).